The primary structure comprises 251 residues: 3-deoxy-manno-octulosonate cytidylyltransferase (251 aa).

Belongs to the KdsB family.

It localises to the cytoplasm. It carries out the reaction 3-deoxy-alpha-D-manno-oct-2-ulosonate + CTP = CMP-3-deoxy-beta-D-manno-octulosonate + diphosphate. Its pathway is nucleotide-sugar biosynthesis; CMP-3-deoxy-D-manno-octulosonate biosynthesis; CMP-3-deoxy-D-manno-octulosonate from 3-deoxy-D-manno-octulosonate and CTP: step 1/1. It participates in bacterial outer membrane biogenesis; lipopolysaccharide biosynthesis. Functionally, activates KDO (a required 8-carbon sugar) for incorporation into bacterial lipopolysaccharide in Gram-negative bacteria. The sequence is that of 3-deoxy-manno-octulosonate cytidylyltransferase from Rhizobium etli (strain ATCC 51251 / DSM 11541 / JCM 21823 / NBRC 15573 / CFN 42).